Consider the following 331-residue polypeptide: NADH-quinone oxidoreductase subunit H 2 (331 aa).

8 helical membrane passes run 6-26 (AGFL…LLVA), 79-99 (IFML…AVIP), 120-140 (VGLL…ALGG), 155-175 (GAAQ…PVVM), 193-213 (PFIL…MAEI), 242-262 (LFFL…AVLF), 271-291 (LPPV…MIWV), and 310-330 (VLIP…LWMG).

This sequence belongs to the complex I subunit 1 family. As to quaternary structure, NDH-1 is composed of 14 different subunits. Subunits NuoA, H, J, K, L, M, N constitute the membrane sector of the complex.

The protein localises to the cell inner membrane. It carries out the reaction a quinone + NADH + 5 H(+)(in) = a quinol + NAD(+) + 4 H(+)(out). In terms of biological role, NDH-1 shuttles electrons from NADH, via FMN and iron-sulfur (Fe-S) centers, to quinones in the respiratory chain. The immediate electron acceptor for the enzyme in this species is believed to be ubiquinone. Couples the redox reaction to proton translocation (for every two electrons transferred, four hydrogen ions are translocated across the cytoplasmic membrane), and thus conserves the redox energy in a proton gradient. This subunit may bind ubiquinone. This Syntrophobacter fumaroxidans (strain DSM 10017 / MPOB) protein is NADH-quinone oxidoreductase subunit H 2.